Here is a 268-residue protein sequence, read N- to C-terminus: Small ribosomal subunit protein eS1 (268 aa).

It belongs to the eukaryotic ribosomal protein eS1 family. As to quaternary structure, component of the small ribosomal subunit. Mature ribosomes consist of a small (40S) and a large (60S) subunit. The 40S subunit contains about 33 different proteins and 1 molecule of RNA (18S). The 60S subunit contains about 49 different proteins and 3 molecules of RNA (28S, 5.8S and 5S).

It is found in the cytoplasm. In Artemia franciscana (Brine shrimp), this protein is Small ribosomal subunit protein eS1.